Here is a 433-residue protein sequence, read N- to C-terminus: MSKIVKVLGREIIDSRGNPTVEAEVHLEGGFVGMAAAPSGASTGSREALELRDGDKSRFLGKGVLKAVEAVNGPIAKALLGQDAKDQANIDKIMIDLDGTENKSNFGANAILAVSLANAKAAAAAKGMPLYEHISDLNGTHGQYSMPLPMMNIINGGEHADNNVDIQEFMIQPVGAPTLKEAVRMGSEIFHHLAKVLKAKGMNTAVGDEGGYAPNLESNAAALAAIKEAVEAAGYVLGKDVTLAMDCAASEFYNNETGNYELKGEGKTFTSQEFTHYLEELTKQYLIVSIEDGLNESDWDGFAYQTKVLGDKIQLVGDDLFVTNTKILKEGIDKGIANSILIKFNQIGSLTETLAAIKMAKDAGYTAIISHRSGETEDATIADLAVGTAAGQIKTGSMSRSDRVAKYNQLIRIEEALGSKAPFNGLKEVKGQA.

A (2R)-2-phosphoglycerate-binding site is contributed by Gln-167. Glu-209 serves as the catalytic Proton donor. 3 residues coordinate Mg(2+): Asp-246, Glu-291, and Asp-318. Lys-326 is modified (N6-acetyllysine). (2R)-2-phosphoglycerate is bound by residues Lys-343, Arg-372, Ser-373, and Lys-394. The active-site Proton acceptor is the Lys-343. At Lys-343 the chain carries N6-(2-hydroxyisobutyryl)lysine.

This sequence belongs to the enolase family. In terms of assembly, component of the RNA degradosome, a multiprotein complex involved in RNA processing and mRNA degradation. Requires Mg(2+) as cofactor. Post-translationally, acetylated and 2-hydroxyisobutyrylated at Lys-326 and Lys-343, respectively, reducing the enolase activity. Deacetylated and de-2-hydroxyisobutyrylated by NpdA/CobB, increasing the enolase activity.

It localises to the cytoplasm. It is found in the secreted. The protein localises to the cell surface. It carries out the reaction (2R)-2-phosphoglycerate = phosphoenolpyruvate + H2O. It functions in the pathway carbohydrate degradation; glycolysis; pyruvate from D-glyceraldehyde 3-phosphate: step 4/5. In terms of biological role, catalyzes the reversible conversion of 2-phosphoglycerate (2-PG) into phosphoenolpyruvate (PEP). It is essential for the degradation of carbohydrates via glycolysis. The protein is Enolase of Proteus mirabilis (strain HI4320).